Consider the following 424-residue polypeptide: Histidine--tRNA ligase (424 aa).

This sequence belongs to the class-II aminoacyl-tRNA synthetase family. In terms of assembly, homodimer.

The protein localises to the cytoplasm. The catalysed reaction is tRNA(His) + L-histidine + ATP = L-histidyl-tRNA(His) + AMP + diphosphate + H(+). The protein is Histidine--tRNA ligase of Salmonella agona (strain SL483).